Consider the following 378-residue polypeptide: C-C chemokine receptor type 7 (378 aa).

The N-terminal stretch at 1–24 (MDLGKPMKSVLVVALLVIFQVCLC) is a signal peptide. Over 25–59 (QDEVTDDYIGDNTTVDYTLFESLCSKKDVRNFKAW) the chain is Extracellular. N36 is a glycosylation site (N-linked (GlcNAc...) asparagine). Residues 60–86 (FLPIMYSIICFVGLLGNGLVVLTYIYF) traverse the membrane as a helical segment. The Cytoplasmic segment spans residues 87–95 (KRLKTMTDT). A helical membrane pass occupies residues 96–116 (YLLNLAVADILFLLTLPFWAY). Residues 117–130 (SAAKSWVFGVHFCK) lie on the Extracellular side of the membrane. An intrachain disulfide couples C129 to C210. A helical transmembrane segment spans residues 131 to 152 (LIFAIYKMSFFSGMLLLLCISI). Topologically, residues 153 to 170 (DRYVAIVQAVSAHRHRAR) are cytoplasmic. A helical membrane pass occupies residues 171–191 (VLLISKLSCVGIWILATVLSI). Residues 192-219 (PELLYSDLQRSSSEQAMRCSLITEHVEA) are Extracellular-facing. The chain crosses the membrane as a helical span at residues 220-247 (FITIQVAQMVIGFLVPLLAMSFCYLVII). Residues 248-263 (RTLLQARNFERNKAIK) are Cytoplasmic-facing. Residues 264–289 (VIIAVVVVFIVFQLPYNGVVLAQTVA) traverse the membrane as a helical segment. Over 290-313 (NFNITSSTCELSKQLNIAYDVTYS) the chain is Extracellular. A helical transmembrane segment spans residues 314–331 (LACVRCCVNPFLYAFIGV). Topologically, residues 332 to 378 (KFRNDLFKLFKDLGCLSQEQLRQWSSCRHIRRSSMSVEAETTTTFSP) are cytoplasmic.

Belongs to the G-protein coupled receptor 1 family. As to expression, expressed in various lymphoid tissues and activated B- and T-lymphocytes, strongly up-regulated in B-cells infected with Epstein-Barr virus and T-cells infected with herpesvirus 6 or 7.

It localises to the cell membrane. In terms of biological role, receptor for the MIP-3-beta chemokine. Probable mediator of EBV effects on B-lymphocytes or of normal lymphocyte functions. The sequence is that of C-C chemokine receptor type 7 (CCR7) from Homo sapiens (Human).